The primary structure comprises 215 residues: Ribonuclease HII (215 aa).

One can recognise an RNase H type-2 domain in the interval 19-214; it reads KNVIGVDEAG…KILETEEEKT (196 aa). Residues D25, E26, and D121 each coordinate a divalent metal cation.

This sequence belongs to the RNase HII family. Requires Mn(2+) as cofactor. Mg(2+) is required as a cofactor.

The protein resides in the cytoplasm. The catalysed reaction is Endonucleolytic cleavage to 5'-phosphomonoester.. Endonuclease that specifically degrades the RNA of RNA-DNA hybrids. The polypeptide is Ribonuclease HII (Fusobacterium nucleatum subsp. nucleatum (strain ATCC 25586 / DSM 15643 / BCRC 10681 / CIP 101130 / JCM 8532 / KCTC 2640 / LMG 13131 / VPI 4355)).